The primary structure comprises 342 residues: S-adenosylmethionine:tRNA ribosyltransferase-isomerase (342 aa).

The protein belongs to the QueA family. Monomer.

Its subcellular location is the cytoplasm. The enzyme catalyses 7-aminomethyl-7-carbaguanosine(34) in tRNA + S-adenosyl-L-methionine = epoxyqueuosine(34) in tRNA + adenine + L-methionine + 2 H(+). Its pathway is tRNA modification; tRNA-queuosine biosynthesis. Functionally, transfers and isomerizes the ribose moiety from AdoMet to the 7-aminomethyl group of 7-deazaguanine (preQ1-tRNA) to give epoxyqueuosine (oQ-tRNA). The polypeptide is S-adenosylmethionine:tRNA ribosyltransferase-isomerase (Bacillus velezensis (strain DSM 23117 / BGSC 10A6 / LMG 26770 / FZB42) (Bacillus amyloliquefaciens subsp. plantarum)).